The sequence spans 136 residues: Putative nickel-responsive regulator (136 aa).

4 residues coordinate Ni(2+): H76, H87, H89, and C95.

The protein belongs to the transcriptional regulatory CopG/NikR family. Ni(2+) is required as a cofactor.

Its function is as follows. Transcriptional regulator. The sequence is that of Putative nickel-responsive regulator from Desulfotalea psychrophila (strain LSv54 / DSM 12343).